Reading from the N-terminus, the 734-residue chain is Photosystem I P700 chlorophyll a apoprotein A2 (734 aa).

8 consecutive transmembrane segments (helical) span residues 46–69 (IFSS…FHVA), 135–158 (LYNG…LHLQ), 175–199 (LNHH…HVAI), 273–291 (MAHH…GHMY), 330–353 (LHMQ…QHMY), 369–395 (AALY…IFFI), 417–439 (AIIS…LYIH), and 517–535 (FLVH…LILV). [4Fe-4S] cluster contacts are provided by Cys559 and Cys568. Transmembrane regions (helical) follow at residues 575–596 (AFYL…YWHW) and 643–665 (LSVW…MFLI). Chlorophyll a is bound by residues His654, Met662, and Tyr670. A phylloquinone-binding site is contributed by Trp671. The helical transmembrane segment at 707-727 (LVGLVHFSVGYILTYAAFVIA) threads the bilayer.

Belongs to the PsaA/PsaB family. The PsaA/B heterodimer binds the P700 chlorophyll special pair and subsequent electron acceptors. PSI consists of a core antenna complex that captures photons, and an electron transfer chain that converts photonic excitation into a charge separation. The eukaryotic PSI reaction center is composed of at least 11 subunits. P700 is a chlorophyll a/chlorophyll a' dimer, A0 is one or more chlorophyll a, A1 is one or both phylloquinones and FX is a shared 4Fe-4S iron-sulfur center. serves as cofactor.

It localises to the plastid. It is found in the chloroplast thylakoid membrane. The enzyme catalyses reduced [plastocyanin] + hnu + oxidized [2Fe-2S]-[ferredoxin] = oxidized [plastocyanin] + reduced [2Fe-2S]-[ferredoxin]. In terms of biological role, psaA and PsaB bind P700, the primary electron donor of photosystem I (PSI), as well as the electron acceptors A0, A1 and FX. PSI is a plastocyanin/cytochrome c6-ferredoxin oxidoreductase, converting photonic excitation into a charge separation, which transfers an electron from the donor P700 chlorophyll pair to the spectroscopically characterized acceptors A0, A1, FX, FA and FB in turn. Oxidized P700 is reduced on the lumenal side of the thylakoid membrane by plastocyanin or cytochrome c6. The sequence is that of Photosystem I P700 chlorophyll a apoprotein A2 from Gracilaria tenuistipitata var. liui (Red alga).